A 37-amino-acid polypeptide reads, in one-letter code: Large ribosomal subunit protein bL36 (37 aa).

It belongs to the bacterial ribosomal protein bL36 family.

The protein is Large ribosomal subunit protein bL36 of Prochlorococcus marinus (strain MIT 9303).